An 88-amino-acid chain; its full sequence is UPF0250 protein Sbal_3280 (88 aa).

The protein belongs to the UPF0250 family.

This Shewanella baltica (strain OS155 / ATCC BAA-1091) protein is UPF0250 protein Sbal_3280.